A 202-amino-acid chain; its full sequence is Snake venom metalloproteinase atroxlysin-1 (202 aa).

In terms of domain architecture, Peptidase M12B spans 6–202 (RYVDLFIVVD…ENPQCILNKR (197 aa)). Positions 9 and 93 each coordinate Ca(2+). Intrachain disulfides connect cysteine 117–cysteine 197, cysteine 157–cysteine 181, and cysteine 159–cysteine 164. Zn(2+) is bound at residue histidine 142. Glutamate 143 is a catalytic residue. Zn(2+) is bound by residues histidine 146 and histidine 152. Ca(2+) is bound by residues cysteine 197 and asparagine 200.

The protein belongs to the venom metalloproteinase (M12B) family. P-I subfamily. As to quaternary structure, monomer. It depends on Zn(2+) as a cofactor. As to expression, expressed by the venom gland.

It is found in the secreted. With respect to regulation, inhibited by EDTA, DTT and high concentrations of zinc ions (&gt;2 mM). Weakly inhibited by TLCK. Not inhibited by PMSF. Activated by calcium ions. In terms of biological role, snake venom zinc metalloproteinase that acts on fibrinogen, fibrin, fibronectin (FN1), type I collagen, type IV collagen, integrin alpha-7/beta-1 (ITGA7/ITGB1) and integrin alpha-1/beta-1 (ITGA1/ITGB1). Binds to fibronectin (FN1), fibrinogen and, weakly, to type I collagen and laminin. Cleaves Xaa-Leu bonds. Inhibits ADP- and collagen-induced platelet aggregation both in the presence (IC(50)=1.4 uM for collagen) and in the absence (IC(50)=2.2 uM for collagen) of cofactors. Has hemorrhagic activity. The protein is Snake venom metalloproteinase atroxlysin-1 of Bothrops atrox (Barba amarilla).